Consider the following 512-residue polypeptide: Maturase K (512 aa).

It belongs to the intron maturase 2 family. MatK subfamily.

The protein localises to the plastid. It localises to the chloroplast. Usually encoded in the trnK tRNA gene intron. Probably assists in splicing its own and other chloroplast group II introns. This is Maturase K from Lilium longiflorum (Trumpet lily).